Consider the following 54-residue polypeptide: UPF0391 membrane protein TERTU_3637 (54 aa).

2 helical membrane passes run 4–24 (WALVFLIFALVAGVLGFTGLA) and 29–49 (SIAWILFVVGLIVSLIFLVAG).

Belongs to the UPF0391 family.

The protein localises to the cell membrane. This chain is UPF0391 membrane protein TERTU_3637, found in Teredinibacter turnerae (strain ATCC 39867 / T7901).